Consider the following 675-residue polypeptide: Zinc finger protein 526 (675 aa).

3 C2H2-type zinc fingers span residues 56–78 (FMCS…QEQH), 108–130 (FQCG…QDAH), and 140–163 (YQCG…KTQH). The interval 160–195 (KTQHLSSAADEPPSPLPPPTPPPPPPPPPPPPPPEV) is disordered. Pro residues predominate over residues 171–194 (PPSPLPPPTPPPPPPPPPPPPPPE). The C2H2-type 4 zinc-finger motif lies at 200–222 (YECPECSTLCATPEEFLEHQGTH). Residues 225–234 (SLEKEEHNGL) are compositionally biased toward basic and acidic residues. The interval 225–283 (SLEKEEHNGLEEEEEDEEEGEEEEDDDDEETDEEEASSELTADDTGSNKSTADSAQSCG) is disordered. Residues 235-261 (EEEEEDEEEGEEEEDDDDEETDEEEAS) are compositionally biased toward acidic residues. The segment covering 269-281 (TGSNKSTADSAQS) has biased composition (polar residues). C2H2-type zinc fingers lie at residues 312 to 334 (FHCS…GRAH), 339 to 361 (HECT…QRLH), 367 to 389 (YLCV…RRAH), and 395 to 416 (HRCR…RRTH). The tract at residues 415–439 (THTGKSGTPTRVATVSPAPAEPTPP) is disordered. A compositionally biased stretch (polar residues) spans 418–427 (GKSGTPTRVA). C2H2-type zinc fingers lie at residues 447–470 (LPCP…RAVH), 477–499 (HRCG…LRTH), 505–527 (FQCH…QLTH), 533–555 (YQCL…RRLH), and 578–600 (YYCG…QRVH). The segment at 606–625 (LTLQPPRSPSPVPPPPPEPQ) is disordered. A compositionally biased stretch (pro residues) spans 611-624 (PRSPSPVPPPPPEP).

The protein belongs to the krueppel C2H2-type zinc-finger protein family.

The protein localises to the nucleus. In terms of biological role, may be involved in transcriptional regulation. In Mus musculus (Mouse), this protein is Zinc finger protein 526 (Znf526).